The following is a 572-amino-acid chain: Probable terpene synthase 13 (572 aa).

The Mg(2+) site is built by Asp326, Asp330, and Glu478. The short motif at 326-330 (DDIFD) is the DDXXD motif element.

The protein belongs to the terpene synthase family. The cofactor is Mg(2+).

In terms of biological role, probable sesquiterpene synthase. This is Probable terpene synthase 13 (TPS13) from Ricinus communis (Castor bean).